The following is a 406-amino-acid chain: Arginine deiminase (406 aa).

C396 acts as the Amidino-cysteine intermediate in catalysis.

The protein belongs to the arginine deiminase family.

Its subcellular location is the cytoplasm. It carries out the reaction L-arginine + H2O = L-citrulline + NH4(+). Its pathway is amino-acid degradation; L-arginine degradation via ADI pathway; carbamoyl phosphate from L-arginine: step 1/2. The polypeptide is Arginine deiminase (Vibrio vulnificus (strain CMCP6)).